Here is a 232-residue protein sequence, read N- to C-terminus: Large ribosomal subunit protein uL1 (232 aa).

Belongs to the universal ribosomal protein uL1 family. As to quaternary structure, part of the 50S ribosomal subunit.

Binds directly to 23S rRNA. The L1 stalk is quite mobile in the ribosome, and is involved in E site tRNA release. Functionally, protein L1 is also a translational repressor protein, it controls the translation of the L11 operon by binding to its mRNA. This Hahella chejuensis (strain KCTC 2396) protein is Large ribosomal subunit protein uL1.